A 410-amino-acid polypeptide reads, in one-letter code: Arginine deiminase (410 aa).

Cys-399 (amidino-cysteine intermediate) is an active-site residue.

Belongs to the arginine deiminase family.

The protein localises to the cytoplasm. It catalyses the reaction L-arginine + H2O = L-citrulline + NH4(+). It functions in the pathway amino-acid degradation; L-arginine degradation via ADI pathway; carbamoyl phosphate from L-arginine: step 1/2. The protein is Arginine deiminase of Listeria monocytogenes serotype 4b (strain F2365).